A 122-amino-acid polypeptide reads, in one-letter code: Small ribosomal subunit protein uS13 (122 aa).

The segment at 94 to 122 (RGLPVRGQKTKTNARTRKGPRKTVAGKRK) is disordered.

This sequence belongs to the universal ribosomal protein uS13 family. In terms of assembly, part of the 30S ribosomal subunit. Forms a loose heterodimer with protein S19. Forms two bridges to the 50S subunit in the 70S ribosome.

Its function is as follows. Located at the top of the head of the 30S subunit, it contacts several helices of the 16S rRNA. In the 70S ribosome it contacts the 23S rRNA (bridge B1a) and protein L5 of the 50S subunit (bridge B1b), connecting the 2 subunits; these bridges are implicated in subunit movement. Contacts the tRNAs in the A and P-sites. This chain is Small ribosomal subunit protein uS13, found in Syntrophotalea carbinolica (strain DSM 2380 / NBRC 103641 / GraBd1) (Pelobacter carbinolicus).